Reading from the N-terminus, the 411-residue chain is Glycerol-3-phosphate dehydrogenase [NAD(+)] (411 aa).

NAD(+)-binding positions include 71–76 (GSGNWG), phenylalanine 103, and phenylalanine 159. Position 182 (lysine 182) interacts with substrate. Alanine 215 contributes to the NAD(+) binding site. Catalysis depends on lysine 275, which acts as the Proton acceptor. Arginine 340 and glutamine 369 together coordinate NAD(+). 340-341 (RN) is a substrate binding site.

The protein belongs to the NAD-dependent glycerol-3-phosphate dehydrogenase family.

The catalysed reaction is sn-glycerol 3-phosphate + NAD(+) = dihydroxyacetone phosphate + NADH + H(+). The polypeptide is Glycerol-3-phosphate dehydrogenase [NAD(+)] (GPD) (Lachancea thermotolerans (Yeast)).